A 358-amino-acid chain; its full sequence is Arogenate dehydrogenase 2, chloroplastic (358 aa).

A chloroplast-targeting transit peptide spans 1-36 (MLLHFSPAKPLISPPNLRRNSPTFLISPPRSLRIRA). One can recognise a Prephenate/arogenate dehydrogenase domain in the interval 59-338 (LKIAVLGFGN…KKTEQKLLND (280 aa)). The disordered stretch occupies residues 336-358 (LNDGGVVPMNDISSSSSSSSSSS). The span at 348–358 (SSSSSSSSSSS) shows a compositional bias: low complexity.

It belongs to the prephenate/arogenate dehydrogenase family. As to expression, expressed in roots, stems, leaves, flowers, siliques and seeds. More abundant in seeds.

It is found in the plastid. It localises to the chloroplast. The catalysed reaction is L-arogenate + NADP(+) = L-tyrosine + CO2 + NADPH. Its pathway is amino-acid biosynthesis; L-tyrosine biosynthesis; L-tyrosine from L-arogenate (NADP(+) route): step 1/1. In terms of biological role, involved in the biosynthesis of tyrosine. Has a weak prephenate dehydrogenase activity. The polypeptide is Arogenate dehydrogenase 2, chloroplastic (TYRAAT2) (Arabidopsis thaliana (Mouse-ear cress)).